A 182-amino-acid chain; its full sequence is Ribulose bisphosphate carboxylase small subunit, chloroplastic (182 aa).

The transit peptide at 1–58 directs the protein to the chloroplast; that stretch reads MASSMISSATIATVNCSSPAQANMVAPFTGLKSASAFPVTRKANNDITSLASNGGRVQ.

This sequence belongs to the RuBisCO small chain family. In terms of assembly, heterohexadecamer of 8 large and 8 small subunits.

Its subcellular location is the plastid. It is found in the chloroplast. RuBisCO catalyzes two reactions: the carboxylation of D-ribulose 1,5-bisphosphate, the primary event in carbon dioxide fixation, as well as the oxidative fragmentation of the pentose substrate. Both reactions occur simultaneously and in competition at the same active site. Although the small subunit is not catalytic it is essential for maximal activity. The polypeptide is Ribulose bisphosphate carboxylase small subunit, chloroplastic (Gossypium hirsutum (Upland cotton)).